Consider the following 494-residue polypeptide: Glycerol kinase (494 aa).

Threonine 13 is a binding site for ADP. ATP-binding residues include threonine 13, threonine 14, and serine 15. Sn-glycerol 3-phosphate is bound at residue threonine 13. Arginine 17 lines the ADP pocket. Arginine 83, glutamate 84, tyrosine 135, and aspartate 244 together coordinate sn-glycerol 3-phosphate. Glycerol is bound by residues arginine 83, glutamate 84, tyrosine 135, aspartate 244, and glutamine 245. ADP-binding residues include threonine 266 and glycine 309. 4 residues coordinate ATP: threonine 266, glycine 309, glutamine 313, and glycine 410. The ADP site is built by glycine 410 and asparagine 414.

The protein belongs to the FGGY kinase family.

The catalysed reaction is glycerol + ATP = sn-glycerol 3-phosphate + ADP + H(+). It functions in the pathway polyol metabolism; glycerol degradation via glycerol kinase pathway; sn-glycerol 3-phosphate from glycerol: step 1/1. Its activity is regulated as follows. Inhibited by fructose 1,6-bisphosphate (FBP). Its function is as follows. Key enzyme in the regulation of glycerol uptake and metabolism. Catalyzes the phosphorylation of glycerol to yield sn-glycerol 3-phosphate. The sequence is that of Glycerol kinase from Shewanella sp. (strain ANA-3).